Reading from the N-terminus, the 406-residue chain is Coenzyme A biosynthesis bifunctional protein CoaBC (406 aa).

The phosphopantothenoylcysteine decarboxylase stretch occupies residues 1–191 (MLNNRNVLLC…ETSAPLEGKH (191 aa)). Cysteine 157 functions as the Proton donor in the catalytic mechanism. The phosphopantothenate--cysteine ligase stretch occupies residues 192–406 (VVITAGPTRE…ALSKQTGERS (215 aa)). The CTP site is built by aspartate 281, lysine 291, phenylalanine 325, lysine 339, and lysine 343.

In the N-terminal section; belongs to the HFCD (homo-oligomeric flavin containing Cys decarboxylase) superfamily. The protein in the C-terminal section; belongs to the PPC synthetase family. Mg(2+) serves as cofactor. The cofactor is FMN.

It carries out the reaction N-[(R)-4-phosphopantothenoyl]-L-cysteine + H(+) = (R)-4'-phosphopantetheine + CO2. The catalysed reaction is (R)-4'-phosphopantothenate + L-cysteine + CTP = N-[(R)-4-phosphopantothenoyl]-L-cysteine + CMP + diphosphate + H(+). The protein operates within cofactor biosynthesis; coenzyme A biosynthesis; CoA from (R)-pantothenate: step 2/5. It functions in the pathway cofactor biosynthesis; coenzyme A biosynthesis; CoA from (R)-pantothenate: step 3/5. Functionally, catalyzes two sequential steps in the biosynthesis of coenzyme A. In the first step cysteine is conjugated to 4'-phosphopantothenate to form 4-phosphopantothenoylcysteine. In the second step the latter compound is decarboxylated to form 4'-phosphopantotheine. The sequence is that of Coenzyme A biosynthesis bifunctional protein CoaBC from Bacillus subtilis (strain 168).